A 172-amino-acid polypeptide reads, in one-letter code: Low molecular mass early light-inducible protein HV90, chloroplastic (172 aa).

The transit peptide at 1 to 38 directs the protein to the chloroplast; it reads MATMMSMSSFAGAAVVPRSSASSFGARSLPALGRRALV. Transmembrane regions (helical) follow at residues 106–126 and 150–170; these read GQAW…VPLL and FAML…APFI.

Belongs to the ELIP/psbS family.

Its subcellular location is the plastid. The protein localises to the chloroplast membrane. In terms of biological role, probably involved in the integration of pigments into the mature pigment-protein complexes. This is Low molecular mass early light-inducible protein HV90, chloroplastic from Hordeum vulgare (Barley).